A 285-amino-acid chain; its full sequence is NAD kinase (285 aa).

Asp66 (proton acceptor) is an active-site residue. NAD(+) is bound by residues 66–67 (DG), 137–138 (ND), Arg148, Arg165, Asp167, and 178–183 (TAYSLS).

It belongs to the NAD kinase family. A divalent metal cation is required as a cofactor.

The protein resides in the cytoplasm. The enzyme catalyses NAD(+) + ATP = ADP + NADP(+) + H(+). Its function is as follows. Involved in the regulation of the intracellular balance of NAD and NADP, and is a key enzyme in the biosynthesis of NADP. Catalyzes specifically the phosphorylation on 2'-hydroxyl of the adenosine moiety of NAD to yield NADP. The protein is NAD kinase of Chlorobium phaeobacteroides (strain BS1).